We begin with the raw amino-acid sequence, 350 residues long: Phosphoribosylformylglycinamidine cyclo-ligase (350 aa).

This sequence belongs to the AIR synthase family.

Its subcellular location is the cytoplasm. The catalysed reaction is 2-formamido-N(1)-(5-O-phospho-beta-D-ribosyl)acetamidine + ATP = 5-amino-1-(5-phospho-beta-D-ribosyl)imidazole + ADP + phosphate + H(+). It functions in the pathway purine metabolism; IMP biosynthesis via de novo pathway; 5-amino-1-(5-phospho-D-ribosyl)imidazole from N(2)-formyl-N(1)-(5-phospho-D-ribosyl)glycinamide: step 2/2. The protein is Phosphoribosylformylglycinamidine cyclo-ligase of Nitratidesulfovibrio vulgaris (strain DSM 19637 / Miyazaki F) (Desulfovibrio vulgaris).